Consider the following 185-residue polypeptide: RING-H2 finger protein ATL8 (185 aa).

The chain crosses the membrane as a helical span at residues 28–48 (LVLILAVLLCALTCIIGLIAV). An RING-type; atypical zinc finger spans residues 104-146 (CAICLTEFAAGDELRVLPQCGHGFHVSCIDTWLGSHSSCPSCR). The segment at 161–185 (PGSSSSGPEPDTRIKQREDGPDNLP) is disordered. Basic and acidic residues predominate over residues 170 to 185 (PDTRIKQREDGPDNLP).

It belongs to the RING-type zinc finger family. ATL subfamily.

It is found in the membrane. The catalysed reaction is S-ubiquitinyl-[E2 ubiquitin-conjugating enzyme]-L-cysteine + [acceptor protein]-L-lysine = [E2 ubiquitin-conjugating enzyme]-L-cysteine + N(6)-ubiquitinyl-[acceptor protein]-L-lysine.. Its pathway is protein modification; protein ubiquitination. The protein is RING-H2 finger protein ATL8 (ATL8) of Arabidopsis thaliana (Mouse-ear cress).